The sequence spans 295 residues: Ankyrin repeat and SOCS box protein 17 (295 aa).

The stretch at 146 to 176 (SGITPLFYVAQTRQSNIFKILLQYGILEREK) is one ANK repeat. The region spanning 232-295 (LGRHPIISNW…RLQNYLNLEI (64 aa)) is the SOCS box domain.

This sequence belongs to the ankyrin SOCS box (ASB) family. As to expression, specifically expressed in testis. Not detected in other tissues tested.

It functions in the pathway protein modification; protein ubiquitination. Its function is as follows. May be a substrate-recognition component of a SCF-like ECS (Elongin-Cullin-SOCS-box protein) E3 ubiquitin-protein ligase complex which mediates the ubiquitination and subsequent proteasomal degradation of target proteins. The sequence is that of Ankyrin repeat and SOCS box protein 17 (ASB17) from Homo sapiens (Human).